A 401-amino-acid polypeptide reads, in one-letter code: Proline-rich protein 30 (401 aa).

Over residues 69–80 (PGPHFSSDSNSD) the composition is skewed to polar residues. Disordered regions lie at residues 69 to 93 (PGPH…PRSS), 129 to 191 (SSSL…RGAG), and 357 to 401 (QSPK…KSPS). Low complexity-rich tracts occupy residues 83-93 (PPHSSSHPRSS) and 129-147 (SSSL…QSPS). Polar residues-rich tracts occupy residues 148–186 (RLQD…SIKS) and 357–368 (QSPKPSQCSRSL).

This is Proline-rich protein 30 (Prr30) from Mus musculus (Mouse).